The sequence spans 448 residues: Chaperone SurA (448 aa).

Positions methionine 1–alanine 27 are cleaved as a signal peptide. 2 PpiC domains span residues glutamine 185–aspartate 288 and isoleucine 301–glycine 399. A disordered region spans residues leucine 230–lysine 249.

The protein resides in the periplasm. It catalyses the reaction [protein]-peptidylproline (omega=180) = [protein]-peptidylproline (omega=0). Chaperone involved in the correct folding and assembly of outer membrane proteins. Recognizes specific patterns of aromatic residues and the orientation of their side chains, which are found more frequently in integral outer membrane proteins. May act in both early periplasmic and late outer membrane-associated steps of protein maturation. The chain is Chaperone SurA from Burkholderia thailandensis (strain ATCC 700388 / DSM 13276 / CCUG 48851 / CIP 106301 / E264).